A 356-amino-acid polypeptide reads, in one-letter code: Probable dual-specificity RNA methyltransferase RlmN (356 aa).

The Proton acceptor role is filled by Glu-92. Positions 98 to 336 constitute a Radical SAM core domain; it reads HKYGFSVCVT…CGVRLEHGTD (239 aa). The cysteines at positions 105 and 341 are disulfide-linked. [4Fe-4S] cluster-binding residues include Cys-112, Cys-116, and Cys-119. Residues 164 to 165, Ser-196, 219 to 221, and Asn-297 each bind S-adenosyl-L-methionine; these read GE and SLH. The S-methylcysteine intermediate role is filled by Cys-341.

This sequence belongs to the radical SAM superfamily. RlmN family. The cofactor is [4Fe-4S] cluster.

The protein resides in the cytoplasm. It catalyses the reaction adenosine(2503) in 23S rRNA + 2 reduced [2Fe-2S]-[ferredoxin] + 2 S-adenosyl-L-methionine = 2-methyladenosine(2503) in 23S rRNA + 5'-deoxyadenosine + L-methionine + 2 oxidized [2Fe-2S]-[ferredoxin] + S-adenosyl-L-homocysteine. It carries out the reaction adenosine(37) in tRNA + 2 reduced [2Fe-2S]-[ferredoxin] + 2 S-adenosyl-L-methionine = 2-methyladenosine(37) in tRNA + 5'-deoxyadenosine + L-methionine + 2 oxidized [2Fe-2S]-[ferredoxin] + S-adenosyl-L-homocysteine. Specifically methylates position 2 of adenine 2503 in 23S rRNA and position 2 of adenine 37 in tRNAs. The polypeptide is Probable dual-specificity RNA methyltransferase RlmN (Shouchella clausii (strain KSM-K16) (Alkalihalobacillus clausii)).